The following is a 66-amino-acid chain: MPKMKTKTAAKKRFKITGTGKVKAAAAGKRHGMIKRSNKFIRDARGTMVLADADAKIVKQFLPNGL.

The protein belongs to the bacterial ribosomal protein bL35 family.

This is Large ribosomal subunit protein bL35 from Brucella canis (strain ATCC 23365 / NCTC 10854 / RM-666).